We begin with the raw amino-acid sequence, 210 residues long: Ribosomal RNA small subunit methyltransferase G (210 aa).

S-adenosyl-L-methionine-binding positions include Gly76, Leu81, 127 to 128 (VE), and Arg142.

This sequence belongs to the methyltransferase superfamily. RNA methyltransferase RsmG family.

The protein resides in the cytoplasm. It catalyses the reaction guanosine(527) in 16S rRNA + S-adenosyl-L-methionine = N(7)-methylguanosine(527) in 16S rRNA + S-adenosyl-L-homocysteine. In terms of biological role, specifically methylates the N7 position of guanine in position 527 of 16S rRNA. The chain is Ribosomal RNA small subunit methyltransferase G from Vibrio cholerae serotype O1 (strain ATCC 39315 / El Tor Inaba N16961).